The chain runs to 96 residues: Large ribosomal subunit protein bL28 (96 aa).

Belongs to the bacterial ribosomal protein bL28 family.

This Methylobacterium nodulans (strain LMG 21967 / CNCM I-2342 / ORS 2060) protein is Large ribosomal subunit protein bL28.